A 393-amino-acid polypeptide reads, in one-letter code: S-adenosylmethionine synthase (393 aa).

His16 lines the ATP pocket. Asp18 provides a ligand contact to Mg(2+). Residue Glu44 coordinates K(+). 2 residues coordinate L-methionine: Glu57 and Gln100. Positions 100–110 are flexible loop; the sequence is QSNDIAQGVDH. ATP is bound by residues 167 to 169, 238 to 239, Asp247, 253 to 254, Ala270, and Lys274; these read DAK, RF, and RK. Asp247 contacts L-methionine. An L-methionine-binding site is contributed by Lys278.

It belongs to the AdoMet synthase family. As to quaternary structure, homotetramer; dimer of dimers. Mg(2+) serves as cofactor. It depends on K(+) as a cofactor.

It localises to the cytoplasm. The catalysed reaction is L-methionine + ATP + H2O = S-adenosyl-L-methionine + phosphate + diphosphate. The protein operates within amino-acid biosynthesis; S-adenosyl-L-methionine biosynthesis; S-adenosyl-L-methionine from L-methionine: step 1/1. Functionally, catalyzes the formation of S-adenosylmethionine (AdoMet) from methionine and ATP. The overall synthetic reaction is composed of two sequential steps, AdoMet formation and the subsequent tripolyphosphate hydrolysis which occurs prior to release of AdoMet from the enzyme. In Acidovorax sp. (strain JS42), this protein is S-adenosylmethionine synthase.